The sequence spans 239 residues: UPF0173 metal-dependent hydrolase DVU_3308 (239 aa).

The protein belongs to the UPF0173 family.

This is UPF0173 metal-dependent hydrolase DVU_3308 from Nitratidesulfovibrio vulgaris (strain ATCC 29579 / DSM 644 / CCUG 34227 / NCIMB 8303 / VKM B-1760 / Hildenborough) (Desulfovibrio vulgaris).